The chain runs to 446 residues: Adenylosuccinate synthetase 1 (446 aa).

GTP-binding positions include 20–26 and 48–50; these read GDEGKGK and GHT. The Proton acceptor role is filled by aspartate 21. Residues aspartate 21 and glycine 48 each coordinate Mg(2+). IMP is bound by residues 21–24, 46–49, threonine 137, arginine 151, glutamine 232, threonine 247, and arginine 319; these read DEGK and NAGH. Residue histidine 49 is the Proton donor of the active site. 315-321 contacts substrate; that stretch reads SVTGRPR. GTP-binding positions include arginine 321, 347–349, and 429–431; these read KLD and STG.

It belongs to the adenylosuccinate synthetase family. In terms of assembly, homodimer. Mg(2+) is required as a cofactor.

It is found in the cytoplasm. The catalysed reaction is IMP + L-aspartate + GTP = N(6)-(1,2-dicarboxyethyl)-AMP + GDP + phosphate + 2 H(+). Its pathway is purine metabolism; AMP biosynthesis via de novo pathway; AMP from IMP: step 1/2. Its function is as follows. Plays an important role in the de novo pathway of purine nucleotide biosynthesis. Catalyzes the first committed step in the biosynthesis of AMP from IMP. This chain is Adenylosuccinate synthetase 1, found in Cupriavidus pinatubonensis (strain JMP 134 / LMG 1197) (Cupriavidus necator (strain JMP 134)).